The primary structure comprises 320 residues: 3-hydroxybenzoate 6-hydroxylase 2 (320 aa).

The tract at residues 1–25 (MRSTNTRSARSRPTKRSVNASATPT) is disordered. The span at 16-25 (RSVNASATPT) shows a compositional bias: polar residues.

This sequence belongs to the 3-hydroxybenzoate 6-hydroxylase family. It depends on FAD as a cofactor.

It carries out the reaction 3-hydroxybenzoate + NADH + O2 + H(+) = 2,5-dihydroxybenzoate + NAD(+) + H2O. Functionally, catalyzes the conversion of 3-hydroxybenzoate to gentisate. The polypeptide is 3-hydroxybenzoate 6-hydroxylase 2 (hbzD) (Aquipseudomonas alcaligenes (Pseudomonas alcaligenes)).